A 39-amino-acid chain; its full sequence is Photosystem II reaction center protein L (39 aa).

Residues S18–F38 traverse the membrane as a helical segment.

Belongs to the PsbL family. PSII is composed of 1 copy each of membrane proteins PsbA, PsbB, PsbC, PsbD, PsbE, PsbF, PsbH, PsbI, PsbJ, PsbK, PsbL, PsbM, PsbT, PsbX, PsbY, Psb30/Ycf12, peripheral proteins PsbO, CyanoQ (PsbQ), PsbU, PsbV and a large number of cofactors. It forms dimeric complexes.

It localises to the cellular thylakoid membrane. In terms of biological role, one of the components of the core complex of photosystem II (PSII). PSII is a light-driven water:plastoquinone oxidoreductase that uses light energy to abstract electrons from H(2)O, generating O(2) and a proton gradient subsequently used for ATP formation. It consists of a core antenna complex that captures photons, and an electron transfer chain that converts photonic excitation into a charge separation. This subunit is found at the monomer-monomer interface and is required for correct PSII assembly and/or dimerization. The polypeptide is Photosystem II reaction center protein L (Prochlorococcus marinus (strain MIT 9211)).